Here is a 369-residue protein sequence, read N- to C-terminus: C2 calcium-dependent domain-containing protein 4A (369 aa).

2 disordered regions span residues 151–176 (PRAPGPATPAAPGCPRPPQDALARRP) and 197–240 (RSRR…PFPE). A compositionally biased stretch (pro residues) spans 153–168 (APGPATPAAPGCPRPP). Over residues 220-237 (SQSPARAPSTSPPSSRVP) the composition is skewed to low complexity. The C2 domain occupies 253-369 (AGDALRLAAE…ELSLGALLLL (117 aa)).

This sequence belongs to the C2CD4 family. Specifically expressed in endothelial cells.

The protein localises to the nucleus. May be involved in inflammatory process. May regulate cell architecture and adhesion. In Homo sapiens (Human), this protein is C2 calcium-dependent domain-containing protein 4A (C2CD4A).